Consider the following 299-residue polypeptide: ATP phosphoribosyltransferase (299 aa).

Belongs to the ATP phosphoribosyltransferase family. Long subfamily. The cofactor is Mg(2+).

The protein resides in the cytoplasm. It catalyses the reaction 1-(5-phospho-beta-D-ribosyl)-ATP + diphosphate = 5-phospho-alpha-D-ribose 1-diphosphate + ATP. Its pathway is amino-acid biosynthesis; L-histidine biosynthesis; L-histidine from 5-phospho-alpha-D-ribose 1-diphosphate: step 1/9. Feedback inhibited by histidine. Catalyzes the condensation of ATP and 5-phosphoribose 1-diphosphate to form N'-(5'-phosphoribosyl)-ATP (PR-ATP). Has a crucial role in the pathway because the rate of histidine biosynthesis seems to be controlled primarily by regulation of HisG enzymatic activity. This is ATP phosphoribosyltransferase from Campylobacter jejuni subsp. jejuni serotype O:2 (strain ATCC 700819 / NCTC 11168).